The primary structure comprises 214 residues: Proteasome subunit beta (214 aa).

The propeptide at 1-11 (MLDTSQEIMKG) is removed in mature form; by autocatalysis. Thr12 serves as the catalytic Nucleophile.

Belongs to the peptidase T1B family. The 20S proteasome core is composed of 14 alpha and 14 beta subunits that assemble into four stacked heptameric rings, resulting in a barrel-shaped structure. The two inner rings, each composed of seven catalytic beta subunits, are sandwiched by two outer rings, each composed of seven alpha subunits. The catalytic chamber with the active sites is on the inside of the barrel. Has a gated structure, the ends of the cylinder being occluded by the N-termini of the alpha-subunits. Is capped at one or both ends by the proteasome regulatory ATPase, PAN.

The protein resides in the cytoplasm. It catalyses the reaction Cleavage of peptide bonds with very broad specificity.. With respect to regulation, the formation of the proteasomal ATPase PAN-20S proteasome complex, via the docking of the C-termini of PAN into the intersubunit pockets in the alpha-rings, triggers opening of the gate for substrate entry. Interconversion between the open-gate and close-gate conformations leads to a dynamic regulation of the 20S proteasome proteolysis activity. Component of the proteasome core, a large protease complex with broad specificity involved in protein degradation. In Methanoculleus marisnigri (strain ATCC 35101 / DSM 1498 / JR1), this protein is Proteasome subunit beta.